Reading from the N-terminus, the 391-residue chain is NAD(P)H-quinone oxidoreductase subunit H, chloroplastic (391 aa).

It belongs to the complex I 49 kDa subunit family. In terms of assembly, NDH is composed of at least 16 different subunits, 5 of which are encoded in the nucleus.

Its subcellular location is the plastid. It is found in the chloroplast thylakoid membrane. The catalysed reaction is a plastoquinone + NADH + (n+1) H(+)(in) = a plastoquinol + NAD(+) + n H(+)(out). The enzyme catalyses a plastoquinone + NADPH + (n+1) H(+)(in) = a plastoquinol + NADP(+) + n H(+)(out). Functionally, NDH shuttles electrons from NAD(P)H:plastoquinone, via FMN and iron-sulfur (Fe-S) centers, to quinones in the photosynthetic chain and possibly in a chloroplast respiratory chain. The immediate electron acceptor for the enzyme in this species is believed to be plastoquinone. Couples the redox reaction to proton translocation, and thus conserves the redox energy in a proton gradient. The sequence is that of NAD(P)H-quinone oxidoreductase subunit H, chloroplastic from Chaetosphaeridium globosum (Charophycean green alga).